The following is a 691-amino-acid chain: Amino-acid acetyltransferase, mitochondrial (691 aa).

The segment covering Met1–Lys27 has biased composition (polar residues). Disordered stretches follow at residues Met1–Tyr29 and Arg65–Val95. Positions Gln75–Ala87 are enriched in basic and acidic residues. The region spanning Asn512–Pro681 is the N-acetyltransferase domain.

The protein belongs to the acetyltransferase family.

It is found in the mitochondrion. It carries out the reaction L-glutamate + acetyl-CoA = N-acetyl-L-glutamate + CoA + H(+). It functions in the pathway amino-acid biosynthesis; L-arginine biosynthesis; N(2)-acetyl-L-ornithine from L-glutamate: step 1/4. Its function is as follows. N-acetylglutamate synthase involved in arginine biosynthesis. The protein is Amino-acid acetyltransferase, mitochondrial (arg2) of Aspergillus terreus (strain NIH 2624 / FGSC A1156).